Here is a 68-residue protein sequence, read N- to C-terminus: Large ribosomal subunit protein bL33c (68 aa).

This sequence belongs to the bacterial ribosomal protein bL33 family.

Its subcellular location is the plastid. In Cuscuta exaltata (Tall dodder), this protein is Large ribosomal subunit protein bL33c.